A 294-amino-acid polypeptide reads, in one-letter code: Keratin-like protein KRT222 (294 aa).

The 150-residue stretch at 1 to 150 (MELSQLLNEI…RLLEQEEIRY (150 aa)) folds into the IF rod domain. The stretch at 1 to 151 (MELSQLLNEI…LLEQEEIRYY (151 aa)) forms a coiled coil.

Belongs to the intermediate filament family.

The sequence is that of Keratin-like protein KRT222 (Krt222) from Mus musculus (Mouse).